The primary structure comprises 323 residues: MSDRPAARRWGKCGPLCTRESIMVAFKGVWTQTFWKAVTAEFLAMLIFVLLSLGSTINWGGAEKPLPVDMVLISLCFGLSIATMVQCFGHISGGHINPAVTVAMVCTRRISIAKSVFYIAAQCLGAIIGAGILYLVTPPSVVGGLGVTTVHGNLSAGHGLLVELIITFQLVFTIFASCDSKRTDVTGSIALAIGISVAIGHLFAINYTGASMNPARSFGPAVIMGNWENHWIYWVGPIIGAVLAGGLYEYVFCPDVELKRRFKEAFSKAAQQTKGSYMEVEDNRSQVETDDLILKPGVVHVIDIDRGEEKKGKDPSGEVLSSV.

At Met1–Lys36 the chain is on the cytoplasmic side. S-palmitoyl cysteine attachment occurs at residues Cys13 and Cys17. Residues Ala37–Ile57 form a helical membrane-spanning segment. Topologically, residues Asn58–Asp69 are extracellular. A helical membrane pass occupies residues Met70–Gly89. Topologically, residues His90–Gly93 are cytoplasmic. Residues Gly94–Thr101 constitute an intramembrane region (discontinuously helical). Positions Asn97–Ala99 match the NPA 1 motif. Residues Val102–Ser115 lie on the Cytoplasmic side of the membrane. Phosphoserine; by PKG is present on Ser111. A helical membrane pass occupies residues Val116–Val136. Residues Thr137–Ser155 are Extracellular-facing. Asn153 carries an N-linked (GlcNAc...) asparagine glycan. The helical transmembrane segment at Ala156 to Ala176 threads the bilayer. Topologically, residues Ser177–Asp184 are cytoplasmic. Position 180 is a phosphoserine; by PKC (Ser180). The helical transmembrane segment at Val185–Ile205 threads the bilayer. Asn206 carries N-linked (GlcNAc...) asparagine glycosylation. The Extracellular portion of the chain corresponds to Asn206–Thr208. An intramembrane region (discontinuously helical) is located at residues Gly209–Val222. Residues Asn213–Ala215 carry the NPA 2 motif. Over Ile223 to Trp231 the chain is Extracellular. Residues Ile232–Phe252 form a helical membrane-spanning segment. Residues Cys253–Val323 are Cytoplasmic-facing. A phosphoserine mark is found at Ser276 and Ser285. The residue at position 289 (Thr289) is a Phosphothreonine. Ser321 bears the Phosphoserine mark.

It belongs to the MIP/aquaporin (TC 1.A.8) family. In terms of assembly, homotetramer. The tetramers can form oligomeric arrays in membranes. The size of the oligomers differs between tissues and is smaller in skeletal muscle than in brain. Interaction between AQP4 oligomeric arrays in close-by cells can contribute to cell-cell adhesion. Part of a complex containing MLC1, TRPV4, HEPACAM and ATP1B1. Phosphorylation by PKC at Ser-180 reduces conductance by 50%. Phosphorylation by PKG at Ser-111 in response to glutamate increases conductance by 40%. Post-translationally, isoform 2: Palmitoylated on its N-terminal region. Isoform 1: Not palmitoylated. In terms of tissue distribution, detected in brain and lung.

It is found in the cell membrane. Its subcellular location is the basolateral cell membrane. The protein resides in the endosome membrane. It localises to the sarcolemma. The protein localises to the cell projection. The catalysed reaction is H2O(in) = H2O(out). Its function is as follows. Forms a water-specific channel. Plays an important role in brain water homeostasis and in glymphatic solute transport. Required for a normal rate of water exchange across the blood brain interface. Required for normal levels of cerebrospinal fluid influx into the brain cortex and parenchyma along paravascular spaces that surround penetrating arteries, and for normal drainage of interstitial fluid along paravenous drainage pathways. Thereby, it is required for normal clearance of solutes from the brain interstitial fluid, including soluble beta-amyloid peptides derived from APP. Plays a redundant role in urinary water homeostasis and urinary concentrating ability. The sequence is that of Aquaporin-4 (AQP4) from Bos taurus (Bovine).